The following is a 246-amino-acid chain: Probable transcriptional regulatory protein TM1040_1893 (246 aa).

Residues 1 to 21 (MAGHSKWANIQHRKGRQDAAR) are disordered.

It belongs to the TACO1 family.

The protein resides in the cytoplasm. The chain is Probable transcriptional regulatory protein TM1040_1893 from Ruegeria sp. (strain TM1040) (Silicibacter sp.).